A 147-amino-acid polypeptide reads, in one-letter code: Hemoglobin subunit deltaH (147 aa).

A Globin domain is found at 3-147; that stretch reads RLTDSEKAEV…MANALAHKYH (145 aa). 2 residues coordinate heme b: His64 and His93.

This sequence belongs to the globin family. Heterotetramer of two delta chains and two alpha chains. In terms of tissue distribution, red blood cells.

In Heterohyrax brucei (Yellow-spotted hyrax), this protein is Hemoglobin subunit deltaH.